Reading from the N-terminus, the 253-residue chain is 5'/3'-nucleotidase SurE (253 aa).

A divalent metal cation contacts are provided by aspartate 8, aspartate 9, serine 39, and asparagine 92.

It belongs to the SurE nucleotidase family. Requires a divalent metal cation as cofactor.

It is found in the cytoplasm. It catalyses the reaction a ribonucleoside 5'-phosphate + H2O = a ribonucleoside + phosphate. It carries out the reaction a ribonucleoside 3'-phosphate + H2O = a ribonucleoside + phosphate. The catalysed reaction is [phosphate](n) + H2O = [phosphate](n-1) + phosphate + H(+). In terms of biological role, nucleotidase with a broad substrate specificity as it can dephosphorylate various ribo- and deoxyribonucleoside 5'-monophosphates and ribonucleoside 3'-monophosphates with highest affinity to 3'-AMP. Also hydrolyzes polyphosphate (exopolyphosphatase activity) with the preference for short-chain-length substrates (P20-25). Might be involved in the regulation of dNTP and NTP pools, and in the turnover of 3'-mononucleotides produced by numerous intracellular RNases (T1, T2, and F) during the degradation of various RNAs. The sequence is that of 5'/3'-nucleotidase SurE from Klebsiella pneumoniae (strain 342).